Here is a 227-residue protein sequence, read N- to C-terminus: Adenosylcobinamide-GDP ribazoletransferase (227 aa).

The next 5 helical transmembrane spans lie at cysteine 3 to phenylalanine 23, isoleucine 26 to phenylalanine 46, glycine 95 to glutamate 115, tryptophan 117 to tyrosine 137, and alanine 165 to phenylalanine 185.

The protein belongs to the CobS family. Mg(2+) serves as cofactor.

It is found in the cell membrane. It carries out the reaction alpha-ribazole + adenosylcob(III)inamide-GDP = adenosylcob(III)alamin + GMP + H(+). The enzyme catalyses alpha-ribazole 5'-phosphate + adenosylcob(III)inamide-GDP = adenosylcob(III)alamin 5'-phosphate + GMP + H(+). It participates in cofactor biosynthesis; adenosylcobalamin biosynthesis; adenosylcobalamin from cob(II)yrinate a,c-diamide: step 7/7. Functionally, joins adenosylcobinamide-GDP and alpha-ribazole to generate adenosylcobalamin (Ado-cobalamin). Also synthesizes adenosylcobalamin 5'-phosphate from adenosylcobinamide-GDP and alpha-ribazole 5'-phosphate. The sequence is that of Adenosylcobinamide-GDP ribazoletransferase from Pyrobaculum islandicum (strain DSM 4184 / JCM 9189 / GEO3).